The primary structure comprises 170 residues: Photosystem I assembly protein Ycf3 (170 aa).

3 TPR repeats span residues 35–68 (AFTYYRDGMSAQAEGEYAEALQNYYEAMRLEVDA), 72–105 (SYILYNIGLIHTSNGEHGRALEYYYQALERNPSL), and 120–153 (GEQAIENGQSEISQILFEKAADYWKEAIRLAPTN).

Belongs to the Ycf3 family.

It localises to the plastid. Its subcellular location is the chloroplast thylakoid membrane. Essential for the assembly of the photosystem I (PSI) complex. May act as a chaperone-like factor to guide the assembly of the PSI subunits. This is Photosystem I assembly protein Ycf3 from Tetradesmus obliquus (Green alga).